The sequence spans 459 residues: Cysteine--tRNA ligase (459 aa).

A Zn(2+)-binding site is contributed by Cys-28. The 'HIGH' region motif lies at 30–40 (MTVYDFCHLGH). Zn(2+)-binding residues include Cys-209, His-234, and Glu-238. Positions 266–270 (KMAKS) match the 'KMSKS' region motif. Lys-269 contacts ATP. A disordered region spans residues 440-459 (QARGIELEDTPEGTKWRRTR).

It belongs to the class-I aminoacyl-tRNA synthetase family. Monomer. Requires Zn(2+) as cofactor.

Its subcellular location is the cytoplasm. It carries out the reaction tRNA(Cys) + L-cysteine + ATP = L-cysteinyl-tRNA(Cys) + AMP + diphosphate. The protein is Cysteine--tRNA ligase of Halorhodospira halophila (strain DSM 244 / SL1) (Ectothiorhodospira halophila (strain DSM 244 / SL1)).